Here is a 197-residue protein sequence, read N- to C-terminus: Holliday junction branch migration complex subunit RuvA (197 aa).

The interval 1–61 is domain I; the sequence is MYEYFEGTIT…ENGMTLYGFK (61 aa). A domain II region spans residues 62-140; that stretch reads SQQDKVLFNK…NYVAENLFTE (79 aa). The flexible linker stretch occupies residues 141-150; that stretch reads DEPVESVFPA. Residues 150 to 197 form a domain III region; sequence ALEDALLALGALGYSQKEVDRIKPKLKKLPEMSADEYIKQGLGFLLKK.

The protein belongs to the RuvA family. In terms of assembly, homotetramer. Forms an RuvA(8)-RuvB(12)-Holliday junction (HJ) complex. HJ DNA is sandwiched between 2 RuvA tetramers; dsDNA enters through RuvA and exits via RuvB. An RuvB hexamer assembles on each DNA strand where it exits the tetramer. Each RuvB hexamer is contacted by two RuvA subunits (via domain III) on 2 adjacent RuvB subunits; this complex drives branch migration. In the full resolvosome a probable DNA-RuvA(4)-RuvB(12)-RuvC(2) complex forms which resolves the HJ.

The protein localises to the cytoplasm. Functionally, the RuvA-RuvB-RuvC complex processes Holliday junction (HJ) DNA during genetic recombination and DNA repair, while the RuvA-RuvB complex plays an important role in the rescue of blocked DNA replication forks via replication fork reversal (RFR). RuvA specifically binds to HJ cruciform DNA, conferring on it an open structure. The RuvB hexamer acts as an ATP-dependent pump, pulling dsDNA into and through the RuvAB complex. HJ branch migration allows RuvC to scan DNA until it finds its consensus sequence, where it cleaves and resolves the cruciform DNA. The protein is Holliday junction branch migration complex subunit RuvA of Lactobacillus delbrueckii subsp. bulgaricus (strain ATCC BAA-365 / Lb-18).